We begin with the raw amino-acid sequence, 418 residues long: MKKVYFKTFGCRTNLFDTQVMSENLKDFSTTLEEQEADIIIINSCTVTNGADSAVRSYAKKMARLDKEVLFTGCGVKTQGKELFEKGFLKGVFGHDNKEKINALLQEKKRFFIDDNLENKHLDTTMVSEFVGKTRAFIKIQEGCDFDCNYCIIPSVRGRARSFEERKILEQVGLLCSKGVQEVVLTGTNVGSYGKDRGSNIARLIKKLSQIAGLKRIRIGSLEPNQINDEFLELLEEDFLEKHLHIALQHSHDLMLERMNRRNRTKSDRELLETIASKNFAIGTDFIVGHPGESGSVFEKAFKNLESLPLTHIHPFIYSKRKDTPSSLMTDSVSLEDSKKRLNAIKDLIFHKNKAFRQLQLKLNTPLKALVEVQKDGEFKALDQFFNPIKIKSDKPLRASFLEIKEYEIKERENHAVF.

Positions 2–110 constitute an MTTase N-terminal domain; it reads KKVYFKTFGC…INALLQEKKR (109 aa). Residues Cys11, Cys45, Cys74, Cys144, Cys148, and Cys151 each coordinate [4Fe-4S] cluster. Residues 130 to 355 form the Radical SAM core domain; it reads FVGKTRAFIK…KDLIFHKNKA (226 aa).

This sequence belongs to the methylthiotransferase family. [4Fe-4S] cluster serves as cofactor.

The polypeptide is Putative methylthiotransferase HP_0285 (Helicobacter pylori (strain ATCC 700392 / 26695) (Campylobacter pylori)).